Consider the following 385-residue polypeptide: Probable splicing factor YJU2B (385 aa).

The disordered stretch occupies residues 1 to 26 (MGERKGQNKYYPPDFNPEKHGSLNRY). At Ser40 the chain carries Phosphoserine. Positions 182 to 215 (LNSMLRRHFREKKKAMQEEEEKDQALQAKANLAI) form a coiled coil. The interval 256–385 (FPSAQGPSTS…VADYSDSESE (130 aa)) is disordered. The span at 260 to 270 (QGPSTSSSKAS) shows a compositional bias: polar residues. A Phosphoserine modification is found at Ser306. Polar residues-rich tracts occupy residues 307 to 316 (PQCTADNSLS) and 359 to 373 (GSSQ…TPNA).

This sequence belongs to the CWC16 family.

The protein localises to the nucleus. May be involved in mRNA splicing. This Rattus norvegicus (Rat) protein is Probable splicing factor YJU2B.